The primary structure comprises 205 residues: ATP-dependent Clp protease proteolytic subunit (205 aa).

S107 acts as the Nucleophile in catalysis. Residue H132 is part of the active site.

It belongs to the peptidase S14 family. In terms of assembly, fourteen ClpP subunits assemble into 2 heptameric rings which stack back to back to give a disk-like structure with a central cavity, resembling the structure of eukaryotic proteasomes.

Its subcellular location is the cytoplasm. The catalysed reaction is Hydrolysis of proteins to small peptides in the presence of ATP and magnesium. alpha-casein is the usual test substrate. In the absence of ATP, only oligopeptides shorter than five residues are hydrolyzed (such as succinyl-Leu-Tyr-|-NHMec, and Leu-Tyr-Leu-|-Tyr-Trp, in which cleavage of the -Tyr-|-Leu- and -Tyr-|-Trp bonds also occurs).. Its function is as follows. Cleaves peptides in various proteins in a process that requires ATP hydrolysis. Has a chymotrypsin-like activity. Plays a major role in the degradation of misfolded proteins. The chain is ATP-dependent Clp protease proteolytic subunit from Pseudoalteromonas translucida (strain TAC 125).